The primary structure comprises 143 residues: MGKCRGLRTARKLRDHRREQKWHDKQYKKAHLGTALKANPFGGASHAKGIVLEKVGVEAKQPNSAIRKCVRVQLIKNGKKITAFVPNDGCLNFIEENDEVLVAGFGRKGHAVGDIPGVRFKVVKVANVSLLALYKGKKERPRS.

Basic residues predominate over residues M1–D15. Residues M1 to Y27 are disordered. Positions H16–Y27 are enriched in basic and acidic residues.

Belongs to the universal ribosomal protein uS12 family. Component of the 40S small ribosomal subunit.

It is found in the cytoplasm. The protein localises to the cytosol. The protein resides in the rough endoplasmic reticulum. The sequence is that of Small ribosomal subunit protein uS12 (rps23) from Ictalurus punctatus (Channel catfish).